We begin with the raw amino-acid sequence, 872 residues long: Tetratricopeptide repeat protein 16 (872 aa).

Residues 1–20 (MTDSDEDALKVDQGPSQDIP) are disordered. TPR repeat units lie at residues 61–94 (VREY…DPQL), 96–128 (DFYA…QQDN), 136–169 (TFVL…QPEK), 251–284 (AQQA…NPLD), 285–318 (PSFF…VTED), 331–364 (LLTY…EQQE), 365–398 (KGLY…SPQD), and 406–439 (GLLQ…NPQK). Disordered regions lie at residues 557–640 (ATPE…ETET) and 653–872 (TAMT…YEVL). Positions 577 to 590 (KEEEEKEEEEQKEE) are enriched in acidic residues. Basic and acidic residues predominate over residues 591–604 (EEQKKEEKKEEKKP). Polar residues-rich tracts occupy residues 610–640 (KVAS…ETET), 653–675 (TAMT…NNRE), 689–709 (GQRQ…NFSK), and 721–754 (KTKA…SQGP). Residues 762–783 (KTTRSPRQRPRKVKAARGRSWR) are compositionally biased toward basic residues. Composition is skewed to polar residues over residues 799 to 827 (RSST…GQRT) and 839 to 861 (GMSS…SKTE).

In Macaca fascicularis (Crab-eating macaque), this protein is Tetratricopeptide repeat protein 16 (TTC16).